The primary structure comprises 346 residues: NADH-ubiquinone oxidoreductase chain 2 (346 aa).

11 helical membrane-spanning segments follow: residues 1–21 (MNPHATPVLVLSLALGTTITI), 25–45 (HWVLAWTGLEINTLAIIPLIS), 60–80 (FLTQAAASALVLFSSMTNAWA), 95–115 (CLLLTAAIAIKLGLVPFHFWF), 124–144 (LMTALLLSTLMKFPPLTLLLM), 149–169 (LNPALLTTMALASAALGGWMG), 178–195 (ILAFSSISHLGWIAIILV), 200–219 (LALLTFYLYTIMTSAVFMAL), 242–262 (ATLMLVLLSLAGLPPLTGFMP), 274–294 (EMTPAAMAIAMLSLLSLFFYL), and 326–346 (AILASLSILLLPLSPMIHAIV).

It belongs to the complex I subunit 2 family.

It localises to the mitochondrion inner membrane. It carries out the reaction a ubiquinone + NADH + 5 H(+)(in) = a ubiquinol + NAD(+) + 4 H(+)(out). Its function is as follows. Core subunit of the mitochondrial membrane respiratory chain NADH dehydrogenase (Complex I) that is believed to belong to the minimal assembly required for catalysis. Complex I functions in the transfer of electrons from NADH to the respiratory chain. The immediate electron acceptor for the enzyme is believed to be ubiquinone. The polypeptide is NADH-ubiquinone oxidoreductase chain 2 (MT-ND2) (Sibirionetta formosa (Baikal teal)).